A 421-amino-acid chain; its full sequence is Leucine-rich repeat-containing protein 42 (421 aa).

LRR repeat units lie at residues 149 to 170 (VLCSLCLRNRYLVVAEKLEEIK), 174 to 195 (ELTRLDLSCCWLGDEHELLEHL), 202 to 222 (SVTQLHLKDNCLSDAGIRKMT), 234 to 255 (NLTLLDLSCNPEITDAGIGYLF), and 259 to 280 (KLNCLDISGTGLKDIKAVKDKL). The segment at 374–406 (HEPLLSQESKKSKKRAFEESEQEQSSPQSAKQK) is disordered. Phosphoserine is present on S399.

Belongs to the LRRC42 family.

The sequence is that of Leucine-rich repeat-containing protein 42 (Lrrc42) from Rattus norvegicus (Rat).